Here is a 484-residue protein sequence, read N- to C-terminus: tRNA sulfurtransferase (484 aa).

In terms of domain architecture, THUMP spans Gly-62–Arg-166. ATP contacts are provided by residues Leu-184–Ile-185, Lys-266, Gly-288, and Gln-297. Cysteines 345 and 456 form a disulfide. The 79-residue stretch at Pro-404–Pro-482 folds into the Rhodanese domain. Cys-456 serves as the catalytic Cysteine persulfide intermediate.

The protein belongs to the ThiI family.

The protein resides in the cytoplasm. The enzyme catalyses [ThiI sulfur-carrier protein]-S-sulfanyl-L-cysteine + a uridine in tRNA + 2 reduced [2Fe-2S]-[ferredoxin] + ATP + H(+) = [ThiI sulfur-carrier protein]-L-cysteine + a 4-thiouridine in tRNA + 2 oxidized [2Fe-2S]-[ferredoxin] + AMP + diphosphate. It carries out the reaction [ThiS sulfur-carrier protein]-C-terminal Gly-Gly-AMP + S-sulfanyl-L-cysteinyl-[cysteine desulfurase] + AH2 = [ThiS sulfur-carrier protein]-C-terminal-Gly-aminoethanethioate + L-cysteinyl-[cysteine desulfurase] + A + AMP + 2 H(+). It functions in the pathway cofactor biosynthesis; thiamine diphosphate biosynthesis. In terms of biological role, catalyzes the ATP-dependent transfer of a sulfur to tRNA to produce 4-thiouridine in position 8 of tRNAs, which functions as a near-UV photosensor. Also catalyzes the transfer of sulfur to the sulfur carrier protein ThiS, forming ThiS-thiocarboxylate. This is a step in the synthesis of thiazole, in the thiamine biosynthesis pathway. The sulfur is donated as persulfide by IscS. The sequence is that of tRNA sulfurtransferase from Marinobacter nauticus (strain ATCC 700491 / DSM 11845 / VT8) (Marinobacter aquaeolei).